We begin with the raw amino-acid sequence, 340 residues long: MNTVNASMTVIGAGSYGTALAITLARNGHSVVLWGHNPAQIQTLQHDRCNQAFLPDVPFPDTLLLEADLARALAASRDVLVVVPSHVFGDVLRQLKPHLRPDARIVWATKGLEAETGRLLQNVAREALGETIPLAVLSGPTFAKELAAGLPTAIALAATDAQFADDLQQGCMHCGKSFRVYSNPDFIGVQLGGAVKNVIAIGAGMSDGIGFGANARTALITRGLAEMSRLGSALGADPSTFMGMAGLGDLVLTCTDNQSRNRRFGIMLGQGKGVQEAQDSIGQVVEGYRNTKEVLALAQRQGVEMPITEQIYQVLYCHKDAREAALSLLGRARKDEKPSV.

Residues Ser15, Tyr16, His36, and Lys110 each coordinate NADPH. Residues Lys110, Gly139, and Thr141 each coordinate sn-glycerol 3-phosphate. Residue Ala143 coordinates NADPH. Residues Lys196, Asp249, Ser259, Arg260, and Asn261 each contribute to the sn-glycerol 3-phosphate site. The active-site Proton acceptor is the Lys196. Arg260 contributes to the NADPH binding site. Residues Val284 and Glu286 each contribute to the NADPH site.

The protein belongs to the NAD-dependent glycerol-3-phosphate dehydrogenase family.

The protein resides in the cytoplasm. It catalyses the reaction sn-glycerol 3-phosphate + NAD(+) = dihydroxyacetone phosphate + NADH + H(+). It carries out the reaction sn-glycerol 3-phosphate + NADP(+) = dihydroxyacetone phosphate + NADPH + H(+). The protein operates within membrane lipid metabolism; glycerophospholipid metabolism. Its function is as follows. Catalyzes the reduction of the glycolytic intermediate dihydroxyacetone phosphate (DHAP) to sn-glycerol 3-phosphate (G3P), the key precursor for phospholipid synthesis. The sequence is that of Glycerol-3-phosphate dehydrogenase [NAD(P)+] from Serratia marcescens.